The following is a 124-amino-acid chain: Protein YobA (124 aa).

The first 26 residues, 1–26 (MASTARSLRYALAILTTSLVTPSVWA), serve as a signal peptide directing secretion. Cu cation contacts are provided by His-27 and His-113.

This sequence belongs to the CopC family.

It localises to the periplasm. The polypeptide is Protein YobA (yobA) (Escherichia coli O6:H1 (strain CFT073 / ATCC 700928 / UPEC)).